The chain runs to 660 residues: tRNA 5-methylaminomethyl-2-thiouridine biosynthesis bifunctional protein MnmC (660 aa).

A tRNA (mnm(5)s(2)U34)-methyltransferase region spans residues 1-242 (MTDRIVPATL…KRAMLVGEFA (242 aa)). Positions 266 to 660 (IGAGLAGCAV…VRALRHGRVA (395 aa)) are FAD-dependent cmnm(5)s(2)U34 oxidoreductase.

It in the N-terminal section; belongs to the methyltransferase superfamily. tRNA (mnm(5)s(2)U34)-methyltransferase family. This sequence in the C-terminal section; belongs to the DAO family. FAD serves as cofactor.

The protein localises to the cytoplasm. The enzyme catalyses 5-aminomethyl-2-thiouridine(34) in tRNA + S-adenosyl-L-methionine = 5-methylaminomethyl-2-thiouridine(34) in tRNA + S-adenosyl-L-homocysteine + H(+). Catalyzes the last two steps in the biosynthesis of 5-methylaminomethyl-2-thiouridine (mnm(5)s(2)U) at the wobble position (U34) in tRNA. Catalyzes the FAD-dependent demodification of cmnm(5)s(2)U34 to nm(5)s(2)U34, followed by the transfer of a methyl group from S-adenosyl-L-methionine to nm(5)s(2)U34, to form mnm(5)s(2)U34. The protein is tRNA 5-methylaminomethyl-2-thiouridine biosynthesis bifunctional protein MnmC of Burkholderia mallei (strain NCTC 10247).